Reading from the N-terminus, the 428-residue chain is 3-phosphoshikimate 1-carboxyvinyltransferase (428 aa).

3 residues coordinate 3-phosphoshikimate: Lys-23, Ser-24, and Arg-28. Lys-23 contributes to the phosphoenolpyruvate binding site. Phosphoenolpyruvate contacts are provided by Gly-97 and Arg-125. Positions 170, 171, 172, 198, 314, 337, and 341 each coordinate 3-phosphoshikimate. Gln-172 contacts phosphoenolpyruvate. The Proton acceptor role is filled by Asp-314. Phosphoenolpyruvate is bound by residues Arg-345, Arg-387, and Lys-412.

Belongs to the EPSP synthase family. As to quaternary structure, monomer.

Its subcellular location is the cytoplasm. It catalyses the reaction 3-phosphoshikimate + phosphoenolpyruvate = 5-O-(1-carboxyvinyl)-3-phosphoshikimate + phosphate. Its pathway is metabolic intermediate biosynthesis; chorismate biosynthesis; chorismate from D-erythrose 4-phosphate and phosphoenolpyruvate: step 6/7. Functionally, catalyzes the transfer of the enolpyruvyl moiety of phosphoenolpyruvate (PEP) to the 5-hydroxyl of shikimate-3-phosphate (S3P) to produce enolpyruvyl shikimate-3-phosphate and inorganic phosphate. This Cronobacter sakazakii (strain ATCC BAA-894) (Enterobacter sakazakii) protein is 3-phosphoshikimate 1-carboxyvinyltransferase.